A 192-amino-acid polypeptide reads, in one-letter code: Shikimate kinase (192 aa).

32 to 37 (GAGKSA) contacts ATP. Ser36 is a binding site for Mg(2+). 3 residues coordinate substrate: Asp54, Arg78, and Gly100. Residue Arg138 coordinates ATP. Arg157 serves as a coordination point for substrate.

The protein belongs to the shikimate kinase family. In terms of assembly, monomer. Mg(2+) is required as a cofactor.

It localises to the cytoplasm. The enzyme catalyses shikimate + ATP = 3-phosphoshikimate + ADP + H(+). The protein operates within metabolic intermediate biosynthesis; chorismate biosynthesis; chorismate from D-erythrose 4-phosphate and phosphoenolpyruvate: step 5/7. Functionally, catalyzes the specific phosphorylation of the 3-hydroxyl group of shikimic acid using ATP as a cosubstrate. The chain is Shikimate kinase from Rhizobium meliloti (strain 1021) (Ensifer meliloti).